A 419-amino-acid chain; its full sequence is G protein-activated inward rectifier potassium channel 4 (419 aa).

The Cytoplasmic portion of the chain corresponds to 1–86; the sequence is MAGDSRNAMN…LFTTLVDLKW (86 aa). Position 5 is a phosphoserine (Ser-5). A helical membrane pass occupies residues 87–111; it reads RFNLLVFTMVYTITWLFFGFIWWLI. Residues 112 to 135 are Extracellular-facing; sequence AYVRGDLDHVGDQEWIPCVENLSG. The segment at residues 136 to 147 is an intramembrane region (helical; Pore-forming); sequence FVSAFLFSIETE. The pore-forming intramembrane region spans 148 to 154; sequence TTIGYGF. The Selectivity filter motif lies at 149 to 154; that stretch reads TIGYGF. Residues 155-163 are Extracellular-facing; that stretch reads RVITEKCPE. The chain crosses the membrane as a helical span at residues 164 to 185; the sequence is GIILLLVQAILGSIVNAFMVGC. Residues 186–419 lie on the Cytoplasmic side of the membrane; sequence MFVKISQPKK…SVSQATRGSM (234 aa). The segment at 388-419 is disordered; that stretch reads GCAEAGNEAEAEKDEEGEPNGLSVSQATRGSM. A compositionally biased stretch (acidic residues) spans 394–405; sequence NEAEAEKDEEGE. Residues 409-419 are compositionally biased toward polar residues; sequence LSVSQATRGSM.

This sequence belongs to the inward rectifier-type potassium channel (TC 1.A.2.1) family. KCNJ5 subfamily. As to quaternary structure, associates with KCNJ3/GIRK1 to form a G-protein-activated heteromultimer pore-forming unit. Associates with KCNJ6/GRIK2 to form a G-protein-activated heteromultimer pore-forming unit. Expressed in the heart.

It localises to the membrane. The enzyme catalyses K(+)(in) = K(+)(out). With respect to regulation, heteromultimer composed of KCNJ3/GIRK1 and KCNJ5/GIRK4 is activated by phosphatidylinositol 4,5 biphosphate (PtdIns(4,5)P2). Its function is as follows. Inward rectifier potassium channels are characterized by a greater tendency to allow potassium to flow into the cell rather than out of it. Their voltage dependence is regulated by the concentration of extracellular potassium; as external potassium is raised, the voltage range of the channel opening shifts to more positive voltages. The inward rectification is mainly due to the blockage of outward current by internal magnesium. Can be blocked by external barium. This potassium channel is controlled by G proteins. Forms a functional channel in association with KCNJ3/GIRK1. The chain is G protein-activated inward rectifier potassium channel 4 (Kcnj5) from Mus musculus (Mouse).